The sequence spans 450 residues: Sulfide:quinone oxidoreductase, mitochondrial (450 aa).

FAD contacts are provided by residues 53–54 (SG), Glu-75, Gln-83, and Val-118. Lys-173 bears the N6-acetyllysine mark. Cys-201 acts as the Cysteine persulfide intermediate in catalysis. Cys-201 and Cys-379 are joined by a disulfide. Asp-336 contacts FAD. Ser-343 carries the post-translational modification Phosphoserine. 344 to 347 (KTAA) serves as a coordination point for FAD. The Cysteine persulfide intermediate role is filled by Cys-379.

It belongs to the SQRD family. FAD serves as cofactor.

It is found in the mitochondrion. The enzyme catalyses ubiquinone-10 + hydrogen sulfide + sulfite + 2 H(+) = ubiquinol-10 + thiosulfate. It carries out the reaction a quinone + hydrogen sulfide + glutathione + H(+) = S-sulfanylglutathione + a quinol. The catalysed reaction is ubiquinone-10 + hydrogen sulfide + glutathione + H(+) = S-sulfanylglutathione + ubiquinol-10. Catalyzes the oxidation of hydrogen sulfide with the help of a quinone, such as ubiquinone-10, giving rise to thiosulfate and ultimately to sulfane (molecular sulfur) atoms. Requires an additional electron acceptor; can use sulfite, sulfide or cyanide (in vitro). It is believed the in vivo electron acceptor is glutathione. The sequence is that of Sulfide:quinone oxidoreductase, mitochondrial from Homo sapiens (Human).